The following is a 193-amino-acid chain: Large ribosomal subunit protein bL9 (193 aa).

The tract at residues 155-193 (AEGETLTSAEAIYDIQEKPLAENQEEMNDNDANSINEQA) is disordered. The span at 184–193 (NDANSINEQA) shows a compositional bias: polar residues.

Belongs to the bacterial ribosomal protein bL9 family.

Its function is as follows. Binds to the 23S rRNA. The protein is Large ribosomal subunit protein bL9 of Bartonella quintana (strain Toulouse) (Rochalimaea quintana).